The sequence spans 77 residues: Small ribosomal subunit protein bS21 (77 aa).

Residues 38-52 (KPSEKRAREKAEAVR) are compositionally biased toward basic and acidic residues. Residues 38-77 (KPSEKRAREKAEAVRRTRKLARKRAQREGLISNGRGSPLK) form a disordered region. Over residues 53 to 62 (RTRKLARKRA) the composition is skewed to basic residues.

Belongs to the bacterial ribosomal protein bS21 family.

The sequence is that of Small ribosomal subunit protein bS21 from Bartonella henselae (strain ATCC 49882 / DSM 28221 / CCUG 30454 / Houston 1) (Rochalimaea henselae).